The following is a 160-amino-acid chain: Large ribosomal subunit protein uL10 (160 aa).

The protein belongs to the universal ribosomal protein uL10 family. Part of the ribosomal stalk of the 50S ribosomal subunit. The N-terminus interacts with L11 and the large rRNA to form the base of the stalk. The C-terminus forms an elongated spine to which L12 dimers bind in a sequential fashion forming a multimeric L10(L12)X complex.

Forms part of the ribosomal stalk, playing a central role in the interaction of the ribosome with GTP-bound translation factors. The polypeptide is Large ribosomal subunit protein uL10 (Ehrlichia canis (strain Jake)).